We begin with the raw amino-acid sequence, 192 residues long: uncharacterized protein (192 aa).

Residues 29-160 (QRQAAVLVPI…PLDIHRRGND (132 aa)) enclose the Nudix hydrolase domain. A Nudix box motif is present at residues 67–89 (GAVDNTDATLIAAALREAQEEVA). The Mg(2+) site is built by E83 and E87.

It belongs to the Nudix hydrolase family. PCD1 subfamily. Mn(2+) serves as cofactor. The cofactor is Mg(2+).

Functionally, probably mediates the hydrolysis of some nucleoside diphosphate derivatives. This is an uncharacterized protein from Klebsiella pneumoniae (strain 342).